The following is a 169-amino-acid chain: Large ribosomal subunit protein uL5 (169 aa).

This sequence belongs to the universal ribosomal protein uL5 family. Part of the 50S ribosomal subunit; contacts the 5S rRNA and probably tRNA. Forms a bridge to the 30S subunit in the 70S ribosome.

This is one of the proteins that bind and probably mediate the attachment of the 5S RNA into the large ribosomal subunit, where it forms part of the central protuberance. In the 70S ribosome it contacts protein S13 of the 30S subunit (bridge B1b), connecting the 2 subunits; this bridge is implicated in subunit movement. May contact the P site tRNA; the 5S rRNA and some of its associated proteins might help stabilize positioning of ribosome-bound tRNAs. The chain is Large ribosomal subunit protein uL5 from Methanosarcina barkeri (strain Fusaro / DSM 804).